A 417-amino-acid chain; its full sequence is NADH-quinone oxidoreductase subunit D (417 aa).

The protein belongs to the complex I 49 kDa subunit family. As to quaternary structure, NDH-1 is composed of 14 different subunits. Subunits NuoB, C, D, E, F, and G constitute the peripheral sector of the complex.

It is found in the cell inner membrane. It catalyses the reaction a quinone + NADH + 5 H(+)(in) = a quinol + NAD(+) + 4 H(+)(out). NDH-1 shuttles electrons from NADH, via FMN and iron-sulfur (Fe-S) centers, to quinones in the respiratory chain. The immediate electron acceptor for the enzyme in this species is believed to be ubiquinone. Couples the redox reaction to proton translocation (for every two electrons transferred, four hydrogen ions are translocated across the cytoplasmic membrane), and thus conserves the redox energy in a proton gradient. The polypeptide is NADH-quinone oxidoreductase subunit D (Polynucleobacter necessarius subsp. necessarius (strain STIR1)).